A 251-amino-acid polypeptide reads, in one-letter code: MGKLLLILGSAIALPSFAAAGGDLDISDTVGVSFWLVTAGMLAATVFFFVERDQVSAKWKTSLTVSGLITGIAFWHYLYMRGVWIDTGDTPTVFRYIDWLLTVPLQVVEFYLILAACTSVAASLFKKLLAGSLVMLGAGFAGEAGLAPVLPAFIIGMAGWLYMIYELYMGEGKAAVSTASPAVNSAYNAMMMIIVVGWAIYPAGYAAGYLMGGEGVYASNLNLIYNLADFVNKILFGLIIWNVAVKESSNA.

The first 18 residues, methionine 1 to alanine 18, serve as a signal peptide directing secretion. 7 helical membrane passes run valine 30 to valine 50, valine 65 to isoleucine 85, isoleucine 97 to cysteine 117, valine 120 to phenylalanine 140, alanine 144 to isoleucine 164, methionine 190 to leucine 210, and leucine 223 to valine 243. Lysine 233 is modified (N6-(retinylidene)lysine).

The protein belongs to the archaeal/bacterial/fungal opsin family. Post-translationally, contains one covalently linked retinal chromophore.

The protein resides in the cell membrane. Its function is as follows. Light-driven proton pump. May have a regulatory rather than energy harvesting function, based on light-induced opening of proton channels, to modulate cell physiology depending on light intensity variations. Could be, therefore, a sensory rhodopsin, potentially associated with a transducer component. This chain is Blue-light absorbing proteorhodopsin, found in Gamma-proteobacterium Hot 75m4.